The primary structure comprises 283 residues: NAD kinase (283 aa).

Asp68 functions as the Proton acceptor in the catalytic mechanism. NAD(+)-binding positions include 68–69 (DG), Arg73, 142–143 (ND), Arg153, Arg170, Asp172, and 183–188 (TAYSLS).

It belongs to the NAD kinase family. The cofactor is a divalent metal cation.

It localises to the cytoplasm. It catalyses the reaction NAD(+) + ATP = ADP + NADP(+) + H(+). Functionally, involved in the regulation of the intracellular balance of NAD and NADP, and is a key enzyme in the biosynthesis of NADP. Catalyzes specifically the phosphorylation on 2'-hydroxyl of the adenosine moiety of NAD to yield NADP. The protein is NAD kinase of Symbiobacterium thermophilum (strain DSM 24528 / JCM 14929 / IAM 14863 / T).